Here is a 511-residue protein sequence, read N- to C-terminus: Colicin-B (511 aa).

The TonB box motif lies at 17–24 (DTMVVWPS). Transmembrane regions (helical) follow at residues 455–475 (MASA…LIAF) and 477–497 (LSAT…GAFI).

The protein belongs to the channel forming colicin family.

The protein localises to the cell membrane. Functionally, this colicin is a channel-forming colicin. This class of transmembrane toxins depolarize the cytoplasmic membrane, leading to dissipation of cellular energy. Colicins are polypeptide toxins produced by and active against E.coli and closely related bacteria. The chain is Colicin-B (cba) from Escherichia coli.